Consider the following 137-residue polypeptide: Large ribosomal subunit protein uL16 (137 aa).

It belongs to the universal ribosomal protein uL16 family. As to quaternary structure, part of the 50S ribosomal subunit.

Binds 23S rRNA and is also seen to make contacts with the A and possibly P site tRNAs. This is Large ribosomal subunit protein uL16 from Streptococcus pyogenes serotype M1.